A 361-amino-acid polypeptide reads, in one-letter code: MPAQDVLTRKTGVIVGDDVKALFDYAKEHKFAIPAINVTSSSTVVAALEAARDNKSPIILQTSNGGAAYFAGKGVSNEGQNASIRGSIAAAHYIRSIAPAYGIPVVLHTDHCAKKLLPWFDGMLKADEEYFAKHGEPLFSSHMLDLSEETDEENIGLCVKYFTRMAKIHQWLEMEIGITGGEEDGVNNEGTSNDKLYTTPETVFSVHEALSKISPNFSIASAFGNVHGVYKIAAALKPELLGTFQDYAAKQLNKKAEDKPLYLVFHGGSGSSTKDFHTAIDFGVVKVNLDTDCQFAYLSGIRDYVLNKKDYLMTPVGNPTGEDSPNKKYYDPRVWVREGEKTMSKRITQALEIFRTKGALE.

A D-glyceraldehyde 3-phosphate-binding site is contributed by Ser63. The Proton donor role is filled by Asp110. 4 residues coordinate Zn(2+): His111, Asp145, Glu175, and His227. Residue Gly228 participates in dihydroxyacetone phosphate binding. A Zn(2+)-binding site is contributed by His266. Residues 267 to 269 (GGS) and 288 to 291 (NLDT) each bind dihydroxyacetone phosphate.

Belongs to the class II fructose-bisphosphate aldolase family. Homodimer. It depends on Zn(2+) as a cofactor.

It catalyses the reaction beta-D-fructose 1,6-bisphosphate = D-glyceraldehyde 3-phosphate + dihydroxyacetone phosphate. It participates in carbohydrate degradation; glycolysis; D-glyceraldehyde 3-phosphate and glycerone phosphate from D-glucose: step 4/4. Its function is as follows. Catalyzes the aldol condensation of dihydroxyacetone phosphate (DHAP or glycerone-phosphate) with glyceraldehyde 3-phosphate (G3P) to form fructose 1,6-bisphosphate (FBP) in gluconeogenesis and the reverse reaction in glycolysis. The sequence is that of Fructose-bisphosphate aldolase (FBA1) from Kluyveromyces lactis (strain ATCC 8585 / CBS 2359 / DSM 70799 / NBRC 1267 / NRRL Y-1140 / WM37) (Yeast).